A 389-amino-acid chain; its full sequence is Chalcone synthase 5 (389 aa).

The active site involves Cys164.

Belongs to the thiolase-like superfamily. Chalcone/stilbene synthases family.

The enzyme catalyses (E)-4-coumaroyl-CoA + 3 malonyl-CoA + 3 H(+) = 2',4,4',6'-tetrahydroxychalcone + 3 CO2 + 4 CoA. The protein operates within secondary metabolite biosynthesis; flavonoid biosynthesis. In terms of biological role, the primary product of this enzyme is 4,2',4',6'-tetrahydroxychalcone (also termed naringenin-chalcone or chalcone) which can under specific conditions spontaneously isomerize into naringenin. The sequence is that of Chalcone synthase 5 (CHS5) from Trifolium subterraneum (Subterranean clover).